We begin with the raw amino-acid sequence, 400 residues long: Elongation factor Tu (400 aa).

Residues 10–209 (KPHVNIGTIG…NVDAYIPTPE (200 aa)) form the tr-type G domain. The interval 19–26 (GHVDHGKT) is G1. Residue 19 to 26 (GHVDHGKT) coordinates GTP. Thr26 is a Mg(2+) binding site. Residues 60–64 (GITIN) form a G2 region. The segment at 81 to 84 (DCPG) is G3. GTP-binding positions include 81 to 85 (DCPGH) and 136 to 139 (NKSD). The interval 136–139 (NKSD) is G4. A G5 region spans residues 174–176 (SGL).

This sequence belongs to the TRAFAC class translation factor GTPase superfamily. Classic translation factor GTPase family. EF-Tu/EF-1A subfamily. Monomer.

Its subcellular location is the cytoplasm. The enzyme catalyses GTP + H2O = GDP + phosphate + H(+). In terms of biological role, GTP hydrolase that promotes the GTP-dependent binding of aminoacyl-tRNA to the A-site of ribosomes during protein biosynthesis. The sequence is that of Elongation factor Tu from Desulforamulus reducens (strain ATCC BAA-1160 / DSM 100696 / MI-1) (Desulfotomaculum reducens).